Here is a 1170-residue protein sequence, read N- to C-terminus: WD repeat-containing protein 35 (1170 aa).

WD repeat units lie at residues 12 to 51 (PNNVKLKCISWNKDQGFIACGGEDGLLKVLRLETQTDDSK), 69 to 108 (GHSGAVQVVTWNEQYQKLTTSDQNGLIIVWMLYKGSWYEE), 113 to 152 (RNKSVVRSMSWNADGQKICIVYEDGAVIVGSVDGNRIWGK), 154 to 193 (LKGIQLCHVTWSADSKILLFGMANGEIHIYDNQGNFIMKM), and 491 to 528 (GTRDPICAITASDKTLIVGRESGVIQRYSFPNVALIQK).

As to quaternary structure, component of the IFT complex A (IFT-A) complex. IFT-A complex is divided into a core subcomplex composed of IFT122:IFT140:WDR19 which is associated with TULP3 and a peripheral subcomplex composed of IFT43:WDR35:TTC21B. Interacts directy with IFT122, ITF43 and TTC21B. Interacts with IFT43. Interacts with CFAP61. In terms of tissue distribution, expressed at high levels in testis and at lower levels in the brain (at protein level). Also present in other tissues, including heart, uterus, spinal cord, ovary, liver, kidney, lung, pancreas and stomach.

It localises to the cytoplasm. It is found in the cytoskeleton. The protein resides in the microtubule organizing center. The protein localises to the centrosome. Its subcellular location is the cilium axoneme. It localises to the cilium basal body. In terms of biological role, as a component of the IFT complex A (IFT-A), a complex required for retrograde ciliary transport and entry into cilia of G protein-coupled receptors (GPCRs), it is involved in ciliogenesis and ciliary protein trafficking. May promote CASP3 activation and TNF-stimulated apoptosis. In Rattus norvegicus (Rat), this protein is WD repeat-containing protein 35 (Wdr35).